Here is a 35-residue protein sequence, read N- to C-terminus: Kappa-stichotoxin-She3a (35 aa).

The region spanning 3–35 is the ShKT domain; the sequence is CIDTIPKSRCTAFQCKHSMKYRLSFCRKTCGTC. 3 disulfides stabilise this stretch: cysteine 3–cysteine 35, cysteine 12–cysteine 28, and cysteine 17–cysteine 32.

Belongs to the sea anemone type 1 potassium channel toxin family. Type 1a subfamily.

The protein localises to the secreted. It localises to the nematocyst. Its function is as follows. Peptide with both antimicrobial and neurotoxin activities. Inhibits voltage-dependent potassium channels. Potently blocks Kv1.1/KCNA1 (IC(50)=6.7-87 pM) and Kv1.3/KCNA3 (IC(50)=10-250 pM). Less potently blocks Kv1.4/KCNA4 (IC(50)=0.31 nM), and Kv1.6/KCNA6 (IC(50)=0.16 nM). Shows moderate activity on Kv1.2/KCNA2 (IC(50)=9 nM), Kv1.7/KCNA7 (IC(50)=11.5 nM), and KCa3.1/KCNN4 (Kd=0.03-30 nM). Blocks Kv channels by binding to a shallow vestibule at the outer entrance to the ion conduction pathway and occluding the entrance to the pore. Shows antibacterial activity against all tested bacteria (the Gram-positive bacteria B.subtilis and S.aureus, and the Gram-negative bacteria S.typhimurium and P.aeruginosa). The sequence is that of Kappa-stichotoxin-She3a from Stichodactyla helianthus (Sun anemone).